The primary structure comprises 320 residues: tRNA N6-adenosine threonylcarbamoyltransferase (320 aa).

Residues His-114 and His-118 each contribute to the Fe cation site. Residues Val-136–Gly-140, Asp-169, Gly-182, Asp-186, and Asn-273 contribute to the substrate site. Asp-297 provides a ligand contact to Fe cation.

Belongs to the KAE1 / TsaD family. Fe(2+) serves as cofactor.

It is found in the cytoplasm. The enzyme catalyses L-threonylcarbamoyladenylate + adenosine(37) in tRNA = N(6)-L-threonylcarbamoyladenosine(37) in tRNA + AMP + H(+). Functionally, required for the formation of a threonylcarbamoyl group on adenosine at position 37 (t(6)A37) in tRNAs that read codons beginning with adenine. Is involved in the transfer of the threonylcarbamoyl moiety of threonylcarbamoyl-AMP (TC-AMP) to the N6 group of A37, together with TsaE and TsaB. TsaD likely plays a direct catalytic role in this reaction. The polypeptide is tRNA N6-adenosine threonylcarbamoyltransferase (Ureaplasma urealyticum serovar 10 (strain ATCC 33699 / Western)).